The sequence spans 275 residues: Endolytic peptidoglycan transglycosylase RlpA (275 aa).

A signal peptide spans 1–22 (MQIKTITLKLSAVSLGALFFSG). A lipid anchor (N-palmitoyl cysteine) is attached at C23. C23 carries S-diacylglycerol cysteine lipidation. Residues 200 to 275 (IYEGGNFMVQ…AFAGAFVVRE (76 aa)) enclose the SPOR domain.

Belongs to the RlpA family.

The protein localises to the cell membrane. Its function is as follows. Lytic transglycosylase with a strong preference for naked glycan strands that lack stem peptides. The protein is Endolytic peptidoglycan transglycosylase RlpA of Campylobacter jejuni subsp. jejuni serotype O:2 (strain ATCC 700819 / NCTC 11168).